The following is a 249-amino-acid chain: MLKRLKGLLVLALGFTGLQVFGQQNPDIKIEKLKDNLYVYTTYNTFKGTKYAANAVYMVTDKGVVVIDSPWGEDKFKSFTDEIYKKHGKKVIMNIATHSHDDRAGGLEYFGKLGAKTYSTKMTDSILAKENKPRAKYTFDNNKSFKVGNTEFQVYYPGKGHTADNVVVWFPKDKVLVGGCIVKSGDSKDLGYIGEAYVNDWTQSIHNIQQKFPDVQYVVAGHDDWKDQTSIQHTLDLISDYQQKQKASN.

Positions 1 to 22 are cleaved as a signal peptide; sequence MLKRLKGLLVLALGFTGLQVFG. Zn(2+)-binding residues include histidine 98, histidine 100, aspartate 102, histidine 161, and cysteine 180. Lysine 183 lines the substrate pocket. Histidine 222 contributes to the Zn(2+) binding site.

The protein belongs to the metallo-beta-lactamase superfamily. Class-B beta-lactamase family. As to quaternary structure, monomer. The cofactor is Zn(2+).

Its subcellular location is the periplasm. The catalysed reaction is a beta-lactam + H2O = a substituted beta-amino acid. In terms of biological role, confers resistance to the different beta-lactams antibiotics (penicillin, cephalosporin and carbapenem) via the hydrolysis of the beta-lactam ring. The chain is Metallo-beta-lactamase type 2 (blaB5) from Elizabethkingia meningoseptica (Chryseobacterium meningosepticum).